Consider the following 37-residue polypeptide: Large ribosomal subunit protein bL36A (37 aa).

This sequence belongs to the bacterial ribosomal protein bL36 family.

The chain is Large ribosomal subunit protein bL36A from Leifsonia xyli subsp. xyli (strain CTCB07).